A 521-amino-acid polypeptide reads, in one-letter code: Two-component response regulator ARR11 (521 aa).

In terms of domain architecture, Response regulatory spans 12–127 (RVLVVDDDPT…ELKIIWQHVL (116 aa)). D63 bears the 4-aspartylphosphate mark. A Nuclear localization signal motif is present at residues 192–195 (KKAR). Residues 195–246 (RVVWSFELHHKFVNAVNQIGCDHKAGPKKILDLMNVPWLTRENVASHLQKYR) constitute a DNA-binding region (myb-like GARP).

It belongs to the ARR family. Type-B subfamily. Binds the target DNA as a monomer. Post-translationally, two-component system major event consists of a His-to-Asp phosphorelay between a sensor histidine kinase (HK) and a response regulator (RR). In plants, the His-to-Asp phosphorelay involves an additional intermediate named Histidine-containing phosphotransfer protein (HPt). This multistep phosphorelay consists of a His-Asp-His-Asp sequential transfer of a phosphate group between first a His and an Asp of the HK protein, followed by the transfer to a conserved His of the HPt protein and finally the transfer to an Asp in the receiver domain of the RR protein. As to expression, detected in the whole plant. Predominantly expressed in roots and stems.

The protein localises to the nucleus. Functionally, transcriptional activator that binds specifically to the DNA sequence 5'-[AG]GATT-3'. Functions as a response regulator involved in His-to-Asp phosphorelay signal transduction system. Phosphorylation of the Asp residue in the receiver domain activates the ability of the protein to promote the transcription of target genes. Could directly activate some type-A response regulators in response to cytokinins. The sequence is that of Two-component response regulator ARR11 (ARR11) from Arabidopsis thaliana (Mouse-ear cress).